The following is a 445-amino-acid chain: Sensor protein kinase CarS (445 aa).

A signal peptide spans 1-24 (MRSIQRRLSVGLFAVLLVVGLVLA). The chain crosses the membrane as a helical span at residues 150-170 (FARVQWMGLGAGALALLLVLL). An HAMP domain is found at 177 to 228 (RRSLRPLEEVRLQIAQLQQGQRSQLDNQAPEELEPLVEQINHLLAHTEETLK). Positions 236 to 438 (NLGHALKTPL…RVSVELPLQK (203 aa)) constitute a Histidine kinase domain. His239 is modified (phosphohistidine; by autocatalysis).

Its subcellular location is the membrane. The catalysed reaction is ATP + protein L-histidine = ADP + protein N-phospho-L-histidine.. In terms of biological role, member of the two-component regulatory system CarS/CarR that regulates the expression of multiple genes involved in calcium signaling and homeostasis including CarO and CarP. May function as a membrane-associated protein kinase that phosphorylates CarR in response to environmental signals leading to activation of specific gene promoters. The chain is Sensor protein kinase CarS (carS) from Pseudomonas aeruginosa (strain ATCC 15692 / DSM 22644 / CIP 104116 / JCM 14847 / LMG 12228 / 1C / PRS 101 / PAO1).